A 402-amino-acid polypeptide reads, in one-letter code: Nicotinate phosphoribosyltransferase (402 aa).

Phosphohistidine; by autocatalysis is present on histidine 221.

It belongs to the NAPRTase family. In terms of processing, transiently phosphorylated on a His residue during the reaction cycle. Phosphorylation strongly increases the affinity for substrates and increases the rate of nicotinate D-ribonucleotide production. Dephosphorylation regenerates the low-affinity form of the enzyme, leading to product release.

It carries out the reaction nicotinate + 5-phospho-alpha-D-ribose 1-diphosphate + ATP + H2O = nicotinate beta-D-ribonucleotide + ADP + phosphate + diphosphate. It functions in the pathway cofactor biosynthesis; NAD(+) biosynthesis; nicotinate D-ribonucleotide from nicotinate: step 1/1. Functionally, catalyzes the synthesis of beta-nicotinate D-ribonucleotide from nicotinate and 5-phospho-D-ribose 1-phosphate at the expense of ATP. The protein is Nicotinate phosphoribosyltransferase of Sodalis glossinidius (strain morsitans).